Here is a 584-residue protein sequence, read N- to C-terminus: MNLKEQVDLLTNKPGCYLFLNKDNEVIYVGKAKNLKKRVSTYFNKAYNIKTTRLIREITHLKYFIVDNEKESLLLEKNLIKKYRPKYNVLLNDDKTYPYIIITNQKDPMYKYVRKYEKKALRNYGPLPIGSNARSILLTLQRLFPLRMCKGDLKKPCLYYHLNQCSGACFKTVDSSYYEYQIKQVDKFFKGEINQVKQTLVKQMQKASDNLQFEQAKRIKDQITSLDFITAKQNVDIVTNKNIDVVNYEINEEKICFVMLFYRLGQLTYKDEYIQNYEGQDLDELLNSYLQQIYQKNLYPDVLLIPNEIDLLDLDENLLEFSSYSFNNQDDIFIKLAKQNAVDSLNKSILSNNVNSGDELEILDQLQQISNINKYPKRIEIFDISNIYNQFITGACIVYINAKPVRNEFRKYNIDSQYTSDYARMKFMLEKRFLKRIKEKEQLPDLIIVDGGIIQIHAAKEVLNKLNLKINVIGLSKDNNHKTRYLIDIFEQTIDIKNFKKLYNFLTSLQIRVDEYAKSGFRKKYHNQLNDQILLIKGVGKKTNLKLYKHFKTIDNIKNASFDELNKIINNKKITNLIISNFKK.

In terms of domain architecture, GIY-YIG spans 12–89 (NKPGCYLFLN…IKKYRPKYNV (78 aa)). In terms of domain architecture, UVR spans 194–229 (NQVKQTLVKQMQKASDNLQFEQAKRIKDQITSLDFI).

This sequence belongs to the UvrC family. As to quaternary structure, interacts with UvrB in an incision complex.

The protein localises to the cytoplasm. Its function is as follows. The UvrABC repair system catalyzes the recognition and processing of DNA lesions. UvrC both incises the 5' and 3' sides of the lesion. The N-terminal half is responsible for the 3' incision and the C-terminal half is responsible for the 5' incision. This chain is UvrABC system protein C, found in Mycoplasma capricolum subsp. capricolum (strain California kid / ATCC 27343 / NCTC 10154).